Consider the following 150-residue polypeptide: Transcriptional repressor NrdR (150 aa).

Residues Cys3–Cys34 fold into a zinc finger. Positions Pro49 to Glu139 constitute an ATP-cone domain.

It belongs to the NrdR family. Zn(2+) serves as cofactor.

Functionally, negatively regulates transcription of bacterial ribonucleotide reductase nrd genes and operons by binding to NrdR-boxes. The polypeptide is Transcriptional repressor NrdR (Citrifermentans bemidjiense (strain ATCC BAA-1014 / DSM 16622 / JCM 12645 / Bem) (Geobacter bemidjiensis)).